Reading from the N-terminus, the 864-residue chain is Leucine--tRNA ligase (864 aa).

A 'HIGH' region motif is present at residues 57 to 67 (PYPSGNLHMGH). The 'KMSKS' region motif lies at 628–632 (KMSKS). Lys631 provides a ligand contact to ATP.

The protein belongs to the class-I aminoacyl-tRNA synthetase family.

Its subcellular location is the cytoplasm. It carries out the reaction tRNA(Leu) + L-leucine + ATP = L-leucyl-tRNA(Leu) + AMP + diphosphate. The protein is Leucine--tRNA ligase of Prochlorococcus marinus (strain MIT 9515).